We begin with the raw amino-acid sequence, 360 residues long: Protein Wnt-2 (360 aa).

Residues 1-26 (MNAPLGGIWLWLPLLLTWLTPEVSSS) form the signal peptide. Cystine bridges form between C76/C87, C127/C135, C137/C157, C206/C220, C208/C215, C278/C309, C294/C304, C308/C348, C324/C339, C326/C336, and C331/C332. A lipid anchor (O-palmitoleoyl serine; by PORCN) is attached at S212. N295 carries N-linked (GlcNAc...) asparagine glycosylation.

It belongs to the Wnt family. Post-translationally, palmitoleoylation is required for efficient binding to frizzled receptors. Depalmitoleoylation leads to Wnt signaling pathway inhibition.

It is found in the secreted. Its subcellular location is the extracellular space. The protein localises to the extracellular matrix. Ligand for members of the frizzled family of seven transmembrane receptors. Probable developmental protein. May be a signaling molecule which affects the development of discrete regions of tissues. Is likely to signal over only few cell diameters. This Eulemur macaco macaco (Black lemur) protein is Protein Wnt-2 (WNT2).